The primary structure comprises 232 residues: Large ribosomal subunit protein uL1 (232 aa).

This sequence belongs to the universal ribosomal protein uL1 family. As to quaternary structure, part of the 50S ribosomal subunit.

Its function is as follows. Binds directly to 23S rRNA. The L1 stalk is quite mobile in the ribosome, and is involved in E site tRNA release. Protein L1 is also a translational repressor protein, it controls the translation of the L11 operon by binding to its mRNA. This is Large ribosomal subunit protein uL1 from Dichelobacter nodosus (strain VCS1703A).